Here is an 89-residue protein sequence, read N- to C-terminus: Small ribosomal subunit protein uS15 (89 aa).

The protein belongs to the universal ribosomal protein uS15 family. In terms of assembly, part of the 30S ribosomal subunit. Forms a bridge to the 50S subunit in the 70S ribosome, contacting the 23S rRNA.

Functionally, one of the primary rRNA binding proteins, it binds directly to 16S rRNA where it helps nucleate assembly of the platform of the 30S subunit by binding and bridging several RNA helices of the 16S rRNA. In terms of biological role, forms an intersubunit bridge (bridge B4) with the 23S rRNA of the 50S subunit in the ribosome. In Paraburkholderia phymatum (strain DSM 17167 / CIP 108236 / LMG 21445 / STM815) (Burkholderia phymatum), this protein is Small ribosomal subunit protein uS15.